The primary structure comprises 1109 residues: Coiled-coil domain-containing protein 158 (1109 aa).

The span at 1 to 12 (MESKACESKNED) shows a compositional bias: basic and acidic residues. The segment at 1-31 (MESKACESKNEDLLPSGITSKGGSSSPFFVT) is disordered. The segment covering 17–31 (GITSKGGSSSPFFVT) has biased composition (polar residues). Coiled-coil stretches lie at residues 71–166 (GKEH…MLKD) and 242–828 (VEDQ…QEQE). 2 disordered regions span residues 843 to 897 (LQGP…DPTR) and 952 to 1061 (HRSN…TGKT). Polar residues-rich tracts occupy residues 862–882 (ASVT…SFLS), 953–970 (RSNN…SSET), and 988–998 (SCFTFTSTASP). Residues 999-1019 (SGKMSASRSFSSSPKKSPVHS) are compositionally biased toward low complexity. Polar residues-rich tracts occupy residues 1020-1037 (LLTS…QYRS) and 1043-1061 (SPTS…TGKT). Positions 1053–1109 (PSLETTGKTCQKLQNRLESLQTLVEDLQLKNQAMSSMIRNQEKRIQKVKDQEKMLLK) form a coiled coil.

This chain is Coiled-coil domain-containing protein 158 (Ccdc158), found in Mus musculus (Mouse).